Consider the following 92-residue polypeptide: Exodeoxyribonuclease 7 small subunit (92 aa).

Positions Ala-71 to Asp-84 are enriched in low complexity. A disordered region spans residues Ala-71 to Ala-92.

Belongs to the XseB family. In terms of assembly, heterooligomer composed of large and small subunits.

The protein resides in the cytoplasm. The enzyme catalyses Exonucleolytic cleavage in either 5'- to 3'- or 3'- to 5'-direction to yield nucleoside 5'-phosphates.. Functionally, bidirectionally degrades single-stranded DNA into large acid-insoluble oligonucleotides, which are then degraded further into small acid-soluble oligonucleotides. This Leifsonia xyli subsp. xyli (strain CTCB07) protein is Exodeoxyribonuclease 7 small subunit.